Here is a 522-residue protein sequence, read N- to C-terminus: Anthranilate synthase component 1 (522 aa).

L-tryptophan is bound by residues S40 and 292-294 (PYM). 329-330 (GT) provides a ligand contact to chorismate. E362 is a binding site for Mg(2+). Chorismate-binding positions include Y450, R470, 484–486 (GAG), and G486. E499 is a Mg(2+) binding site.

The protein belongs to the anthranilate synthase component I family. In terms of assembly, heterotetramer consisting of two non-identical subunits: a beta subunit (TrpG) and a large alpha subunit (TrpE). It depends on Mg(2+) as a cofactor.

The catalysed reaction is chorismate + L-glutamine = anthranilate + pyruvate + L-glutamate + H(+). The protein operates within amino-acid biosynthesis; L-tryptophan biosynthesis; L-tryptophan from chorismate: step 1/5. With respect to regulation, feedback inhibited by tryptophan. Functionally, part of a heterotetrameric complex that catalyzes the two-step biosynthesis of anthranilate, an intermediate in the biosynthesis of L-tryptophan. In the first step, the glutamine-binding beta subunit (TrpG) of anthranilate synthase (AS) provides the glutamine amidotransferase activity which generates ammonia as a substrate that, along with chorismate, is used in the second step, catalyzed by the large alpha subunit of AS (TrpE) to produce anthranilate. In the absence of TrpG, TrpE can synthesize anthranilate directly from chorismate and high concentrations of ammonia. The protein is Anthranilate synthase component 1 (trpE) of Buchnera aphidicola subsp. Baizongia pistaciae (strain Bp).